A 545-amino-acid polypeptide reads, in one-letter code: Serine/threonine-protein kinase PAK 1 (545 aa).

The interval M1 to I75 is disordered. The residue at position 2 (S2) is an N-acetylserine. Position 21 is a phosphoserine; by PKB and autocatalysis (S21). Phosphoserine; by autocatalysis is present on S57. The tract at residues K70 to K140 is autoregulatory region. Residues I75–G88 form the CRIB domain. Residues I75–R105 are GTPase-binding. A Phosphothreonine; by OXSR1 modification is found at T84. S115 carries the phosphoserine modification. Phosphotyrosine occurs at positions 131 and 142. Phosphoserine; by autocatalysis occurs at positions 144 and 149. Residues A150–K198 are disordered. Positions D152–E166 are enriched in polar residues. The residue at position 153 (Y153) is a Phosphotyrosine; by JAK2. S174 is modified (phosphoserine). A compositionally biased stretch (acidic residues) spans S174–A184. T185 bears the Phosphothreonine mark. At S199 the chain carries Phosphoserine; by autocatalysis. The residue at position 201 (Y201) is a Phosphotyrosine; by JAK2. Phosphoserine; by autocatalysis is present on S204. The interval P210–D250 is disordered. 2 positions are modified to phosphothreonine: T212 and T219. 2 positions are modified to phosphoserine: S220 and S223. Residues S220 to P231 are compositionally biased toward polar residues. T225, T229, and T230 each carry phosphothreonine. One can recognise a Protein kinase domain in the interval Y270 to L521. I276–V284 serves as a coordination point for ATP. Y285 carries the post-translational modification Phosphotyrosine; by JAK2. ATP is bound at residue K299. Residue D389 is the Proton acceptor of the active site. T423 is modified (phosphothreonine; by autocatalysis, BRSK2 and PDPK1).

This sequence belongs to the protein kinase superfamily. STE Ser/Thr protein kinase family. STE20 subfamily. In terms of assembly, homodimer in its autoinhibited state. Active as monomer. Interacts with GIT1. Component of cytoplasmic complexes, which also contains PXN, ARHGEF7 and GIT1. Interacts with NISCH. Interacts with DVL1; mediates the formation of a DVL1, MUSK and PAK1 ternary complex involved in AChR clustering. Binds to the caspase-cleaved p110 isoform of CDC2L1 and CDC2L2, p110C, but not the full-length proteins. Interacts with ARHGEF7. Interacts tightly with GTP-bound but not GDP-bound CDC42/P21 and RAC1. Interacts with SCRIB. Interacts with PDPK1. Interacts (via kinase domain) with RAF1. Interacts with NCK1 and NCK2. Interacts with TBCB. Interacts with BRSK2. Interacts with SNAI1. Interacts with CIB1 (via N-terminal region); the interaction is direct, promotes PAK1 activity and occurs in a calcium-dependent manner. Interacts with INPP5K. Interacts with gamma-tubulin. Interacts with RHOU; the interaction promotes PAK1 activation. Requires Mg(2+) as cofactor. In terms of processing, autophosphorylated in trans, meaning that in a dimer, one kinase molecule phosphorylates the other one. Activated by autophosphorylation at Thr-423 in response to a conformation change, triggered by interaction with GTP-bound CDC42 or RAC1. Activated by phosphorylation at Thr-423 by BRSK2 and by PDPK1. Phosphorylated by JAK2 in response to PRL; this increases PAK1 kinase activity. Phosphorylated at Ser-21 by PKB/AKT; this reduces interaction with NCK1 and association with focal adhesion sites. Upon DNA damage, phosphorylated at Thr-212 and translocates to the nucleoplasm. Phosphorylated at tyrosine residues, which can be enhanced by NTN1.

It is found in the cytoplasm. It localises to the cell junction. Its subcellular location is the focal adhesion. The protein resides in the cell projection. The protein localises to the lamellipodium. It is found in the cell membrane. It localises to the ruffle membrane. Its subcellular location is the invadopodium. The protein resides in the nucleus. The protein localises to the nucleoplasm. It is found in the chromosome. It localises to the cytoskeleton. Its subcellular location is the microtubule organizing center. The protein resides in the centrosome. The enzyme catalyses L-seryl-[protein] + ATP = O-phospho-L-seryl-[protein] + ADP + H(+). It carries out the reaction L-threonyl-[protein] + ATP = O-phospho-L-threonyl-[protein] + ADP + H(+). With respect to regulation, phosphorylation of Thr-84 by OXSR1 inhibits activation. Activated by binding small G proteins. Binding of GTP-bound CDC42 or RAC1 to the autoregulatory region releases monomers from the autoinhibited dimer, and enables activation by phosphorylation of Thr-423. In terms of biological role, protein kinase involved in intracellular signaling pathways downstream of integrins and receptor-type kinases that plays an important role in cytoskeleton dynamics, in cell adhesion, migration, proliferation, apoptosis, mitosis, and in vesicle-mediated transport processes. Can directly phosphorylate BAD and protects cells against apoptosis. Activated by interaction with CDC42 and RAC1. Functions as a GTPase effector that links the Rho-related GTPases CDC42 and RAC1 to the JNK MAP kinase pathway. Phosphorylates and activates MAP2K1, and thereby mediates activation of downstream MAP kinases. Involved in the reorganization of the actin cytoskeleton, actin stress fibers and of focal adhesion complexes. Phosphorylates the tubulin chaperone TBCB and thereby plays a role in the regulation of microtubule biogenesis and organization of the tubulin cytoskeleton. Plays a role in the regulation of insulin secretion in response to elevated glucose levels. Part of a ternary complex that contains PAK1, DVL1 and MUSK that is important for MUSK-dependent regulation of AChR clustering during the formation of the neuromuscular junction (NMJ). Activity is inhibited in cells undergoing apoptosis, potentially due to binding of CDC2L1 and CDC2L2. Phosphorylates MYL9/MLC2. Phosphorylates RAF1 at 'Ser-338' and 'Ser-339' resulting in: activation of RAF1, stimulation of RAF1 translocation to mitochondria, phosphorylation of BAD by RAF1, and RAF1 binding to BCL2. Phosphorylates SNAI1 at 'Ser-246' promoting its transcriptional repressor activity by increasing its accumulation in the nucleus. In podocytes, promotes NR3C2 nuclear localization. Required for atypical chemokine receptor ACKR2-induced phosphorylation of LIMK1 and cofilin (CFL1) and for the up-regulation of ACKR2 from endosomal compartment to cell membrane, increasing its efficiency in chemokine uptake and degradation. In synapses, seems to mediate the regulation of F-actin cluster formation performed by SHANK3, maybe through CFL1 phosphorylation and inactivation. Plays a role in RUFY3-mediated facilitating gastric cancer cells migration and invasion. In response to DNA damage, phosphorylates MORC2 which activates its ATPase activity and facilitates chromatin remodeling. In neurons, plays a crucial role in regulating GABA(A) receptor synaptic stability and hence GABAergic inhibitory synaptic transmission through its role in F-actin stabilization. In hippocampal neurons, necessary for the formation of dendritic spines and excitatory synapses; this function is dependent on kinase activity and may be exerted by the regulation of actomyosin contractility through the phosphorylation of myosin II regulatory light chain (MLC). Along with GIT1, positively regulates microtubule nucleation during interphase. Phosphorylates FXR1, promoting its localization to stress granules and activity. Phosphorylates ILK on 'Thr-173' and 'Ser-246', promoting nuclear export of ILK. In Mus musculus (Mouse), this protein is Serine/threonine-protein kinase PAK 1.